Here is a 1366-residue protein sequence, read N- to C-terminus: DNA-directed RNA polymerase subunit beta' (1366 aa).

A compositionally biased stretch (basic residues) spans 1–23; the sequence is MTSSKPKKSSRVRKTSKNSKKNN. Residues 1–25 form a disordered region; the sequence is MTSSKPKKSSRVRKTSKNSKKNNKI. Zn(2+) is bound by residues C248, C315, C322, and C325. The disordered stretch occupies residues 1290–1366; that stretch reads DYTVDMPQSP…LQEEGLLSDE (77 aa). Positions 1295 to 1305 are enriched in polar residues; sequence MPQSPTVSSTA. Over residues 1354-1366 the composition is skewed to low complexity; the sequence is LEGLQEEGLLSDE.

Belongs to the RNA polymerase beta' chain family. RpoC2 subfamily. In terms of assembly, in cyanobacteria the RNAP catalytic core is composed of 2 alpha, 1 beta, 1 beta', 1 gamma and 1 omega subunit. When a sigma factor is associated with the core the holoenzyme is formed, which can initiate transcription. The cofactor is Zn(2+).

It catalyses the reaction RNA(n) + a ribonucleoside 5'-triphosphate = RNA(n+1) + diphosphate. DNA-dependent RNA polymerase catalyzes the transcription of DNA into RNA using the four ribonucleoside triphosphates as substrates. The protein is DNA-directed RNA polymerase subunit beta' of Prochlorococcus marinus (strain MIT 9515).